Here is an 800-residue protein sequence, read N- to C-terminus: DNA topoisomerase 4 subunit A (800 aa).

One can recognise a Topo IIA-type catalytic domain in the interval L31–E495. Y119 acts as the O-(5'-phospho-DNA)-tyrosine intermediate in catalysis.

Belongs to the type II topoisomerase GyrA/ParC subunit family. ParC type 2 subfamily. Heterotetramer composed of ParC and ParE.

The protein localises to the cell membrane. It catalyses the reaction ATP-dependent breakage, passage and rejoining of double-stranded DNA.. Functionally, topoisomerase IV is essential for chromosome segregation. It relaxes supercoiled DNA. Performs the decatenation events required during the replication of a circular DNA molecule. This is DNA topoisomerase 4 subunit A from Staphylococcus aureus.